Here is a 281-residue protein sequence, read N- to C-terminus: Release factor glutamine methyltransferase (281 aa).

Glutamate 141 and asparagine 185 together coordinate S-adenosyl-L-methionine. 185–188 (NPPY) serves as a coordination point for substrate.

The protein belongs to the protein N5-glutamine methyltransferase family. PrmC subfamily.

It carries out the reaction L-glutaminyl-[peptide chain release factor] + S-adenosyl-L-methionine = N(5)-methyl-L-glutaminyl-[peptide chain release factor] + S-adenosyl-L-homocysteine + H(+). Methylates the class 1 translation termination release factors RF1/PrfA and RF2/PrfB on the glutamine residue of the universally conserved GGQ motif. In Mycolicibacterium smegmatis (strain ATCC 700084 / mc(2)155) (Mycobacterium smegmatis), this protein is Release factor glutamine methyltransferase.